The following is a 350-amino-acid chain: tRNA uridine(34) hydroxylase (350 aa).

The 95-residue stretch at 146–240 (DDPDALFIDM…YARKAREQGL (95 aa)) folds into the Rhodanese domain. Cys-200 (cysteine persulfide intermediate) is an active-site residue.

It belongs to the TrhO family.

The enzyme catalyses uridine(34) in tRNA + AH2 + O2 = 5-hydroxyuridine(34) in tRNA + A + H2O. Functionally, catalyzes oxygen-dependent 5-hydroxyuridine (ho5U) modification at position 34 in tRNAs. This chain is tRNA uridine(34) hydroxylase, found in Shigella flexneri serotype 5b (strain 8401).